The sequence spans 415 residues: Actin-like protein 9 (415 aa).

The interval 1–22 is disordered; the sequence is MDVNGHPKFQPSPETDGPLPLT.

Belongs to the actin family. Interacts with ACTL7A.

Its subcellular location is the cytoplasmic vesicle. The protein localises to the secretory vesicle. It is found in the acrosome. It localises to the cytoplasm. The protein resides in the cytoskeleton. Its subcellular location is the perinuclear theca. In terms of biological role, testis-specic protein that plays an important role in fusion of proacrosomal vesicles and perinuclear theca formation. The protein is Actin-like protein 9 (Actl9) of Mus musculus (Mouse).